A 313-amino-acid chain; its full sequence is Ribosomal RNA small subunit methyltransferase H (313 aa).

S-adenosyl-L-methionine contacts are provided by residues 35–37 (GGH), aspartate 55, phenylalanine 80, aspartate 102, and glutamine 109.

Belongs to the methyltransferase superfamily. RsmH family.

The protein localises to the cytoplasm. The enzyme catalyses cytidine(1402) in 16S rRNA + S-adenosyl-L-methionine = N(4)-methylcytidine(1402) in 16S rRNA + S-adenosyl-L-homocysteine + H(+). Specifically methylates the N4 position of cytidine in position 1402 (C1402) of 16S rRNA. This Shewanella putrefaciens (strain CN-32 / ATCC BAA-453) protein is Ribosomal RNA small subunit methyltransferase H.